The chain runs to 955 residues: GPI inositol-deacylase B (955 aa).

N-linked (GlcNAc...) asparagine glycosylation is present at asparagine 7. The helical transmembrane segment at 8 to 28 (ASVALWTVFTILTIWISFALH) threads the bilayer. Serine 180 is an active-site residue. Asparagine 431 is a glycosylation site (N-linked (GlcNAc...) asparagine). Transmembrane regions (helical) follow at residues 489-509 (IAFPALTSGLISYKVLTSGGV), 600-620 (LLFSLPTAVLYAVLLLQFWRY), 643-663 (YLSWACLVVAGLSFVIKFEFI), and 703-723 (PIGVVLAPAFLALATGIVVVV). The N-linked (GlcNAc...) asparagine glycan is linked to asparagine 753. Transmembrane regions (helical) follow at residues 772 to 792 (VIIALMALLVLLFVPYQLAFA), 840 to 860 (TMSVVMVWTTLVNIPVLAVWV), and 870 to 890 (IFSSHHNLLSVLPTLLFIENL). N-linked (GlcNAc...) asparagine glycosylation occurs at asparagine 914. Residues 919 to 939 (GMMHAFMIHHWFNLLAGWLLI) traverse the membrane as a helical segment. An N-linked (GlcNAc...) asparagine glycan is attached at asparagine 945.

The protein belongs to the GPI inositol-deacylase family.

Its subcellular location is the endoplasmic reticulum membrane. Functionally, involved in inositol deacylation of GPI-anchored proteins which plays important roles in the quality control and ER-associated degradation of GPI-anchored proteins. The chain is GPI inositol-deacylase B (BST1B) from Yarrowia lipolytica (strain CLIB 122 / E 150) (Yeast).